We begin with the raw amino-acid sequence, 158 residues long: Cyclic pyranopterin monophosphate synthase (158 aa).

Residues 76–78 and 114–115 contribute to the substrate site; these read LCH and ME. D129 is an active-site residue.

The protein belongs to the MoaC family. As to quaternary structure, homohexamer; trimer of dimers.

It carries out the reaction (8S)-3',8-cyclo-7,8-dihydroguanosine 5'-triphosphate = cyclic pyranopterin phosphate + diphosphate. Its pathway is cofactor biosynthesis; molybdopterin biosynthesis. In terms of biological role, catalyzes the conversion of (8S)-3',8-cyclo-7,8-dihydroguanosine 5'-triphosphate to cyclic pyranopterin monophosphate (cPMP). This chain is Cyclic pyranopterin monophosphate synthase, found in Shewanella halifaxensis (strain HAW-EB4).